Consider the following 213-residue polypeptide: Probable GTP-binding protein EngB (213 aa).

The EngB-type G domain maps to 30-204; sequence SVQSIAFMGR…REFILETLGI (175 aa). GTP-binding positions include 38-45, 65-69, 83-86, 150-153, and 183-185; these read GRSNSGKS, GKTKL, DLPG, TKID, and ISA. Mg(2+)-binding residues include Ser45 and Thr67.

It belongs to the TRAFAC class TrmE-Era-EngA-EngB-Septin-like GTPase superfamily. EngB GTPase family. Requires Mg(2+) as cofactor.

Functionally, necessary for normal cell division and for the maintenance of normal septation. The polypeptide is Probable GTP-binding protein EngB (Leptospira biflexa serovar Patoc (strain Patoc 1 / Ames)).